The following is a 201-amino-acid chain: MAIILPELPYAYDALEPQFDAETMTLHHDKHHATYVANTNAALEKHPEIGENLEELLADVTKIPEDIRQALINNGGGHLNHALFWELLSPEKQDVTSDVAQAIDDAFGSFDAFKEQFTAAATGRFGSGWAWLVVNKEGQLEITSTANQDTPISEGKKPILALDVWEHAYYLNYRNVRPNYIKAFFEIINWKKVSELYQAAK.

His-27, His-81, Asp-163, and His-167 together coordinate Mn(2+).

This sequence belongs to the iron/manganese superoxide dismutase family. Homodimer. Requires Mn(2+) as cofactor.

It is found in the secreted. It carries out the reaction 2 superoxide + 2 H(+) = H2O2 + O2. Its function is as follows. Destroys superoxide anion radicals which are normally produced within the cells and which are toxic to biological systems. This is Superoxide dismutase [Mn] (sodA) from Streptococcus pyogenes serotype M3 (strain ATCC BAA-595 / MGAS315).